Here is a 682-residue protein sequence, read N- to C-terminus: Tail-specific protease (682 aa).

The N-terminal stretch at 1–22 (MNMFFRLTALAGLLAIAGQTFA) is a signal peptide. In terms of domain architecture, PDZ spans 238-322 (NTEMSLSLEG…SKVRLEILPA (85 aa)). Catalysis depends on charge relay system residues Ser-452, Asp-463, and Lys-477. Basic and acidic residues predominate over residues 635–650 (GKPELKKLDDLPKDYQ). The tract at residues 635–654 (GKPELKKLDDLPKDYQEPDP) is disordered.

This sequence belongs to the peptidase S41A family.

The protein localises to the cell inner membrane. The catalysed reaction is The enzyme shows specific recognition of a C-terminal tripeptide, Xaa-Yaa-Zaa, in which Xaa is preferably Ala or Leu, Yaa is preferably Ala or Tyr, and Zaa is preferably Ala, but then cleaves at a variable distance from the C-terminus. A typical cleavage is -Ala-Ala-|-Arg-Ala-Ala-Lys-Glu-Asn-Tyr-Ala-Leu-Ala-Ala.. In terms of biological role, involved in the cleavage of a C-terminal peptide of 11 residues from the precursor form of penicillin-binding protein 3 (PBP3). May be involved in protection of the bacterium from thermal and osmotic stresses. This Escherichia coli (strain K12) protein is Tail-specific protease (prc).